The chain runs to 41 residues: Mu-conotoxin pn4c (41 aa).

Residues 1 to 24 constitute a propeptide that is removed on maturation; that stretch reads DQPAERMQDDISSEHHPFFDPVKR.

It belongs to the conotoxin M superfamily. In terms of processing, contains 3 disulfide bonds. They are not added, since framework IV presents two different connectivities (I-V, II-III, IV-VI and I-III, II-V, IV-VI). Expressed by the venom duct.

Its subcellular location is the secreted. In terms of biological role, mu-conotoxins block voltage-gated sodium channels (Nav). Blocks reversibly sodium channels in molluskan neurons, but has no effect on sodium currents in bovine chromaffin cells or in rat brain synaptosomes. Induces paralysis in mollusks (C.retripictus). The protein is Mu-conotoxin pn4c of Conus pennaceus (Feathered cone).